The chain runs to 310 residues: Ribosomal RNA small subunit methyltransferase H (310 aa).

S-adenosyl-L-methionine-binding positions include 32-34 (GGH), Asp52, Ala83, Asp100, and Gln107.

This sequence belongs to the methyltransferase superfamily. RsmH family.

It localises to the cytoplasm. It catalyses the reaction cytidine(1402) in 16S rRNA + S-adenosyl-L-methionine = N(4)-methylcytidine(1402) in 16S rRNA + S-adenosyl-L-homocysteine + H(+). Functionally, specifically methylates the N4 position of cytidine in position 1402 (C1402) of 16S rRNA. This is Ribosomal RNA small subunit methyltransferase H from Geobacillus sp. (strain WCH70).